A 229-amino-acid chain; its full sequence is Urease accessory protein UreF (229 aa).

Belongs to the UreF family. As to quaternary structure, ureD, UreF and UreG form a complex that acts as a GTP-hydrolysis-dependent molecular chaperone, activating the urease apoprotein by helping to assemble the nickel containing metallocenter of UreC. The UreE protein probably delivers the nickel.

It localises to the cytoplasm. In terms of biological role, required for maturation of urease via the functional incorporation of the urease nickel metallocenter. The chain is Urease accessory protein UreF from Nostoc sp. (strain PCC 7120 / SAG 25.82 / UTEX 2576).